Consider the following 378-residue polypeptide: AT-hook motif nuclear-localized protein 5 (378 aa).

Disordered stretches follow at residues 30–70 (QVAS…AEHR), 88–160 (VQPT…GRKQ), and 302–378 (NNNK…LTRG). Over residues 104–113 (VKKKRGRPRK) the composition is skewed to basic residues. Residues 105–113 (KKKRGRPRK) carry the Bipartite nuclear localization signal motif. 2 consecutive DNA-binding regions (a.T hook) follow at residues 105–117 (KKKRGRPRKYVPD) and 147–159 (KRARGRPPGTGRK). Positions 171–314 (TSAGLAFAPH…KTIKQEIKPK (144 aa)) constitute a PPC domain. Polar residues-rich tracts occupy residues 316–327 (EPTNSEMETTPG) and 335–345 (STGQHTPQNFP).

Interacts with AHL29.

Its subcellular location is the nucleus. In terms of biological role, transcription factor that specifically binds AT-rich DNA sequences related to the nuclear matrix attachment regions (MARs). This chain is AT-hook motif nuclear-localized protein 5, found in Arabidopsis thaliana (Mouse-ear cress).